Here is a 260-residue protein sequence, read N- to C-terminus: MFRNQYDGDVTVWSPQGRLHQVEYAVEAMKQGSATVGIKSETHAVIVALKRAQNDLSSHQKKVYEIDTHAGVSIAGLLSDGRILARYLQTECSSWRWDYKQAVPIKKLAESMQLKLQANTQYYGRRPFGVGILIAGYDKDGAHIIQTDPSAEVVSMHGTSIGARSQSARTYLERNVDNFEKSTPEQLIVHALLALRDTLPAEENLNAQNTSIGIVGKDSPFSLLEDAQVAVHLNQVSTHPRTTGGAAAAAAPGGAEPMQM.

The disordered stretch occupies residues 240–260 (PRTTGGAAAAAAPGGAEPMQM). A compositionally biased stretch (low complexity) spans 244–260 (GGAAAAAAPGGAEPMQM).

It belongs to the peptidase T1A family. In terms of assembly, the 26S proteasome consists of a 20S proteasome core and two 19S regulatory subunits. The 20S proteasome core is composed of 28 subunits that are arranged in four stacked rings, resulting in a barrel-shaped structure. The two end rings are each formed by seven alpha subunits, and the two central rings are each formed by seven beta subunits. The catalytic chamber with the active sites is on the inside of the barrel.

The protein localises to the cytoplasm. It is found in the nucleus. In terms of biological role, the proteasome is a multicatalytic proteinase complex which is characterized by its ability to cleave peptides with Arg, Phe, Tyr, Leu, and Glu adjacent to the leaving group at neutral or slightly basic pH. The proteasome has an ATP-dependent proteolytic activity. In Caenorhabditis elegans, this protein is Proteasome subunit alpha type-1 (pas-6).